The chain runs to 509 residues: Steroid 17-alpha-hydroxylase/17,20 lyase (509 aa).

Substrate is bound at residue Asn202. Heme is bound at residue Cys442.

The protein belongs to the cytochrome P450 family. The cofactor is heme.

The protein localises to the endoplasmic reticulum membrane. It is found in the microsome membrane. The catalysed reaction is a C21-steroid + reduced [NADPH--hemoprotein reductase] + O2 = a 17alpha-hydroxy-C21-steroid + oxidized [NADPH--hemoprotein reductase] + H2O + H(+). It carries out the reaction progesterone + reduced [NADPH--hemoprotein reductase] + O2 = 17alpha-hydroxyprogesterone + oxidized [NADPH--hemoprotein reductase] + H2O + H(+). The enzyme catalyses pregnenolone + reduced [NADPH--hemoprotein reductase] + O2 = 17alpha-hydroxypregnenolone + oxidized [NADPH--hemoprotein reductase] + H2O + H(+). It catalyses the reaction 17alpha-hydroxyprogesterone + reduced [NADPH--hemoprotein reductase] + O2 = androst-4-ene-3,17-dione + acetate + oxidized [NADPH--hemoprotein reductase] + H2O + 2 H(+). The catalysed reaction is 17alpha-hydroxyprogesterone + reduced [NADPH--hemoprotein reductase] + O2 = 16alpha,17alpha-dihydroxyprogesterone + oxidized [NADPH--hemoprotein reductase] + H2O + H(+). It carries out the reaction 16alpha,17alpha-dihydroxyprogesterone + reduced [NADPH--hemoprotein reductase] + O2 = 6beta,16alpha,17alpha-trihydroxyprogesterone + oxidized [NADPH--hemoprotein reductase] + H2O + H(+). The enzyme catalyses 17alpha-hydroxypregnenolone + reduced [NADPH--hemoprotein reductase] + O2 = 3beta-hydroxyandrost-5-en-17-one + acetate + oxidized [NADPH--hemoprotein reductase] + H2O + 2 H(+). It catalyses the reaction 16alpha,17alpha-dihydroxypregnenolone + reduced [NADPH--hemoprotein reductase] + O2 = 3beta,16alpha-dihydroxy-androst-5-en-17-one + acetate + oxidized [NADPH--hemoprotein reductase] + H2O + 2 H(+). The catalysed reaction is 3beta-hydroxyandrost-5-en-17-one + reduced [NADPH--hemoprotein reductase] + O2 = 3beta,16alpha-dihydroxy-androst-5-en-17-one + oxidized [NADPH--hemoprotein reductase] + H2O + H(+). It carries out the reaction androst-4-ene-3,17-dione + reduced [NADPH--hemoprotein reductase] + O2 = 16alpha-hydroxyandrost-4-ene-3,17-dione + oxidized [NADPH--hemoprotein reductase] + H2O + H(+). Its pathway is steroid hormone biosynthesis. It functions in the pathway steroid biosynthesis; glucocorticoid biosynthesis. Regulated predominantly by intracellular cAMP levels. The 17,20-lyase activity is stimulated by cytochrome b5, which acts as an allosteric effector increasing the Vmax of the lyase activity. A cytochrome P450 monooxygenase involved in corticoid and androgen biosynthesis. Catalyzes 17-alpha hydroxylation of C21 steroids, which is common for both pathways. A second oxidative step, required only for androgen synthesis, involves an acyl-carbon cleavage. The 17-alpha hydroxy intermediates, as part of adrenal glucocorticoids biosynthesis pathway, are precursors of cortisol. Hydroxylates steroid hormones, pregnenolone and progesterone to form 17-alpha hydroxy metabolites, followed by the cleavage of the C17-C20 bond to form C19 steroids, dehydroepiandrosterone (DHEA) and androstenedione. Has 16-alpha hydroxylase activity. Catalyzes 16-alpha hydroxylation of 17-alpha hydroxy pregnenolone, followed by the cleavage of the C17-C20 bond to form 16-alpha-hydroxy DHEA. Also 16-alpha hydroxylates androgens, relevant for estriol synthesis. Mechanistically, uses molecular oxygen inserting one oxygen atom into a substrate, and reducing the second into a water molecule, with two electrons provided by NADPH via cytochrome P450 reductase (CPR; NADPH-ferrihemoprotein reductase). This is Steroid 17-alpha-hydroxylase/17,20 lyase (CYP17A1) from Capra hircus (Goat).